A 419-amino-acid chain; its full sequence is MATTIPTTATATMCPSPPVPTISPLLRTTHQCQPSPSLSSPFSIKLSTALVCGDTTVDRVVDSSVMIKPEKWGIQSEKRRKRRRRRRVGYERLEPEEEENAGVEAEAETISVPVVGASRSGFLSRLEEVQLCLYLKEGAKLENLGTSVEENEMVSVLLASGRGKKKRSANEILCRRKEAREKITRCYRRLVVSIATGYQGKGLNLQDLIQEGSIGLLRGAERFDPDRGYKLSTYVYWWIKQAILRAIAHKSRLVKLPGSMWELTAKVAEASNVLTRKLRRQPSCEEIAEHLNLNVSAVRLAVERSRSPVSLDRVASQNGRMTLQEIVRGPDETRPEEMVKREHMKHEIEQLLGSLTARESRVLGLYFGLNGETPMSFEEIGKSLKLSRERVRQINGIALKKLRNVHNVNDLKIYYSSSE.

Residues 1–52 (MATTIPTTATATMCPSPPVPTISPLLRTTHQCQPSPSLSSPFSIKLSTALVC) constitute a chloroplast transit peptide. Residues 207–220 (DLIQEGSIGLLRGA) carry the Polymerase core binding motif. The segment at residues 377–396 (FEEIGKSLKLSRERVRQING) is a DNA-binding region (H-T-H motif).

Belongs to the sigma-70 factor family. Mostly expressed in leaves, and to a lesser extent in roots. Present in seedlings.

The protein localises to the plastid. The protein resides in the chloroplast. Functionally, sigma factors are initiation factors that promote the attachment of plastid-encoded RNA polymerase (PEP) to specific initiation sites and are then released. Regulates transcription of the ndhF gene which codes for a subunit of the plastid NDH [NAD(P)H dehydrogenase] complex. In Arabidopsis thaliana (Mouse-ear cress), this protein is RNA polymerase sigma factor sigD, chloroplastic (SIGD).